Here is a 42-residue protein sequence, read N- to C-terminus: Large ribosomal subunit protein bL36 (42 aa).

Belongs to the bacterial ribosomal protein bL36 family.

The chain is Large ribosomal subunit protein bL36 from Wolbachia pipientis wMel.